Here is a 191-residue protein sequence, read N- to C-terminus: Large ribosomal subunit protein uL5 (191 aa).

It belongs to the universal ribosomal protein uL5 family. As to quaternary structure, part of the 50S ribosomal subunit; part of the 5S rRNA/L5/L18/L25 subcomplex. Contacts the 5S rRNA and the P site tRNA. Forms a bridge to the 30S subunit in the 70S ribosome.

Functionally, this is one of the proteins that bind and probably mediate the attachment of the 5S RNA into the large ribosomal subunit, where it forms part of the central protuberance. In the 70S ribosome it contacts protein S13 of the 30S subunit (bridge B1b), connecting the 2 subunits; this bridge is implicated in subunit movement. Contacts the P site tRNA; the 5S rRNA and some of its associated proteins might help stabilize positioning of ribosome-bound tRNAs. The sequence is that of Large ribosomal subunit protein uL5 from Corynebacterium glutamicum (strain R).